Consider the following 22-residue polypeptide: Brain peptide MVPVPVHHMADELLRNGPDTVI (22 aa).

The polypeptide is Brain peptide MVPVPVHHMADELLRNGPDTVI (Apis mellifera (Honeybee)).